The sequence spans 322 residues: Ribosomal RNA large subunit methyltransferase F (322 aa).

It belongs to the methyltransferase superfamily. METTL16/RlmF family.

It localises to the cytoplasm. It carries out the reaction adenosine(1618) in 23S rRNA + S-adenosyl-L-methionine = N(6)-methyladenosine(1618) in 23S rRNA + S-adenosyl-L-homocysteine + H(+). Specifically methylates the adenine in position 1618 of 23S rRNA. In Cytophaga hutchinsonii (strain ATCC 33406 / DSM 1761 / CIP 103989 / NBRC 15051 / NCIMB 9469 / D465), this protein is Ribosomal RNA large subunit methyltransferase F.